Here is a 291-residue protein sequence, read N- to C-terminus: Ribosomal RNA small subunit methyltransferase A (291 aa).

S-adenosyl-L-methionine is bound by residues H37, L39, G64, E85, D110, and N131.

Belongs to the class I-like SAM-binding methyltransferase superfamily. rRNA adenine N(6)-methyltransferase family. RsmA subfamily.

It is found in the cytoplasm. The catalysed reaction is adenosine(1518)/adenosine(1519) in 16S rRNA + 4 S-adenosyl-L-methionine = N(6)-dimethyladenosine(1518)/N(6)-dimethyladenosine(1519) in 16S rRNA + 4 S-adenosyl-L-homocysteine + 4 H(+). Its function is as follows. Specifically dimethylates two adjacent adenosines (A1518 and A1519) in the loop of a conserved hairpin near the 3'-end of 16S rRNA in the 30S particle. May play a critical role in biogenesis of 30S subunits. The sequence is that of Ribosomal RNA small subunit methyltransferase A from Dehalococcoides mccartyi (strain CBDB1).